Here is a 3930-residue protein sequence, read N- to C-terminus: Hybrid PKS-NRPS synthetase apdA (3930 aa).

Residues 2–440 (QDLIAIVGSA…GTNAHAIIEG (439 aa)) form the Ketosynthase family 3 (KS3) domain. Residues C176, H313, and H361 each act as for beta-ketoacyl synthase activity in the active site. The tract at residues 557 to 879 (IFTGQGAQWA…MRRGDNEIEA (323 aa)) is malonyl-CoA:ACP transacylase (MAT) domain. Residues 948–1085 (HELLGRRVPD…GRLIINYGDP (138 aa)) are N-terminal hotdog fold. The dehydratase (DH) domain stretch occupies residues 948–1251 (HELLGRRVPD…SMKSMSEPQP (304 aa)). In terms of domain architecture, PKS/mFAS DH spans 948 to 1252 (HELLGRRVPD…MKSMSEPQPE (305 aa)). Residue H980 is the Proton acceptor; for dehydratase activity of the active site. A C-terminal hotdog fold region spans residues 1100 to 1252 (NVPVDMGRFY…MKSMSEPQPE (153 aa)). D1159 serves as the catalytic Proton donor; for dehydratase activity. The interval 1389–1588 (QDDMLNRFYM…FSGLDCLAPD (200 aa)) is methyltransferase (MT) domain. The segment at 2088–2229 (ATYLLAGMTG…SLASIIGNAA (142 aa)) is ketoreductase (KR) domain. In terms of domain architecture, Carrier 1 spans 2326-2403 (AVIPIVQEAF…QICEDAVRQF (78 aa)). The residue at position 2363 (S2363) is an O-(pantetheine 4'-phosphoryl)serine. 2 disordered regions span residues 2414–2433 (VAPNMTEKPETKSHPSSNAT) and 2444–2494 (DAAN…VDAD). The span at 2445 to 2473 (AANGDYESSSQGDDSRGNSSSSSSHTSPS) shows a compositional bias: low complexity. Residues 2509-2937 (PASFAQSRLW…SLPVNQLPVT (429 aa)) are condensation (C) domain. Residues 2971–3371 (KSFPEETAIK…GTLIFMGRMD (401 aa)) are adenylation (A) (KR) domain. The tract at residues 2971 to 3371 (KSFPEETAIK…GTLIFMGRMD (401 aa)) is reductase (RED) domain. One can recognise a Carrier 2 domain in the interval 3493-3572 (RHLSLAEGEL…QMARRISRRK (80 aa)). An O-(pantetheine 4'-phosphoryl)serine modification is found at S3532.

The protein in the C-terminal section; belongs to the NRP synthetase family.

The protein operates within secondary metabolite biosynthesis. Functionally, hybrid PKS-NRPS synthetase; part of the gene cluster that mediates the biosynthesis of aspyridones. The polyketide-amino acid backbone preaspyridone A is first assembled by the PKS-NRPS hybrid apdA. The assembly of preaspyridone A is initiated by loading of malonyl-CoA onto apdA, followed by decarboxylation to yield the acetyl starter unit. The growing polyketide chain then elongates into a tetraketide. The adpA PKS module catalyzes three Claisen condensations, as well as beta-keto processing and methylation. Alpha-methylation step during polyketide synthesis is a prerequisite and a key checkpoint for chain transfer between PKS and NRPS modules. The downstream NRPS module contains the condensation (C), adenylation (A), and thiolation (T) domains and catalyzes the incorporation of tyrosine via the formation of the L-tyrosinyl-thioester and the amide linkage between L-tyrosinyl-thioester and the tetraketide. The bimodular assembly line is terminated with a reductase (R) domain that facilitates formation and release of the tetramic acid product. Because apdA lacks a designated enoylreductase (ER) domain, the required activity is provided the enoyl reductase apdC. ApdC appears to operate with different stereoselectivity in different PKS cycle. Combined with apdC, apdA is proposed to synthesize preaspyridone A via about 20 enzymatic steps. A number of oxidative steps performed successively by the cytochrome P450 monooxygenases apdE and apdB are required for the conversion of preaspyridone A to aspyridone A. The cytochrome P450 monooxygenase apdE is responsible for the oxidative dephenylation of preaspyridone A. Finally, the predicted FAD-dependent monooxygenase apdD and the acyl-CoA dehydrogenase apdG may be involved in the transformation of aspyridone A into aspyridone B. In Emericella nidulans (strain FGSC A4 / ATCC 38163 / CBS 112.46 / NRRL 194 / M139) (Aspergillus nidulans), this protein is Hybrid PKS-NRPS synthetase apdA.